The primary structure comprises 93 residues: Small hydrophobic protein (93 aa).

2 consecutive transmembrane segments (helical) span residues 5 to 25 (LIII…VLAY) and 32 to 52 (AFGP…IYFP).

Its subcellular location is the membrane. The protein is Small hydrophobic protein of Tupaia virus (isolate Tupaia/Thailand/-/1986) (TUPV).